Here is a 394-residue protein sequence, read N- to C-terminus: Choline/ethanolamine kinase (394 aa).

Ala2 carries the N-acetylalanine modification. The segment at 22 to 42 (GLLDAKCPEPIPNRRRSSSLS) is disordered. Residues 75 to 81 (SGGLSNL), Arg104, 146 to 152 (QYLPSRP), Gln244, and Asp264 contribute to the ATP site. Substrate is bound at residue 77 to 79 (GLS).

This sequence belongs to the choline/ethanolamine kinase family. As to quaternary structure, homodimer, and heterodimer with CHKA.

It carries out the reaction choline + ATP = phosphocholine + ADP + H(+). The catalysed reaction is ethanolamine + ATP = phosphoethanolamine + ADP + H(+). Its pathway is phospholipid metabolism; phosphatidylethanolamine biosynthesis; phosphatidylethanolamine from ethanolamine: step 1/3. Functionally, has a key role in phospholipid metabolism, and catalyzes the first step of phosphatidylethanolamine and phosphatidylcholine biosynthesis. This Rattus norvegicus (Rat) protein is Choline/ethanolamine kinase (Chkb).